A 264-amino-acid chain; its full sequence is Thymidylate synthase (264 aa).

R21 is a dUMP binding site. H51 contributes to the (6R)-5,10-methylene-5,6,7,8-tetrahydrofolate binding site. 126–127 provides a ligand contact to dUMP; that stretch reads RR. C146 serves as the catalytic Nucleophile. DUMP contacts are provided by residues 166–169, N177, and 207–209; these read RSAD and HLY. D169 is a binding site for (6R)-5,10-methylene-5,6,7,8-tetrahydrofolate. (6R)-5,10-methylene-5,6,7,8-tetrahydrofolate is bound at residue A263.

Belongs to the thymidylate synthase family. Bacterial-type ThyA subfamily. As to quaternary structure, homodimer.

It localises to the cytoplasm. It carries out the reaction dUMP + (6R)-5,10-methylene-5,6,7,8-tetrahydrofolate = 7,8-dihydrofolate + dTMP. It functions in the pathway pyrimidine metabolism; dTTP biosynthesis. Catalyzes the reductive methylation of 2'-deoxyuridine-5'-monophosphate (dUMP) to 2'-deoxythymidine-5'-monophosphate (dTMP) while utilizing 5,10-methylenetetrahydrofolate (mTHF) as the methyl donor and reductant in the reaction, yielding dihydrofolate (DHF) as a by-product. This enzymatic reaction provides an intracellular de novo source of dTMP, an essential precursor for DNA biosynthesis. The polypeptide is Thymidylate synthase (Cytophaga hutchinsonii (strain ATCC 33406 / DSM 1761 / CIP 103989 / NBRC 15051 / NCIMB 9469 / D465)).